The primary structure comprises 107 residues: Theromyzin (107 aa).

A signal peptide spans 1-21; that stretch reads MHAKIILALFLGMTAFLAVQA.

In terms of tissue distribution, coelomic liquid (at protein level). Expressed in large fat cells in contact with coelomic cavities, in intestinal epithelia and at the epidermis level.

Its subcellular location is the secreted. In terms of biological role, has bacteriostatic activity against M.luteus. No activity toward E.coli and F.oxysporum. This Theromyzon tessulatum (Duck leech) protein is Theromyzin.